The sequence spans 303 residues: Vesicle-trafficking protein SEC22c (303 aa).

At 1–183 the chain is on the cytoplasmic side; sequence MSVIFFACVV…EPAPNFRMEP (183 aa). One can recognise a Longin domain in the interval 8-119; that stretch reads CVVRVRDGLP…YAFLEFDSII (112 aa). Residues 184–204 traverse the membrane as a helical segment; it reads VTALGILSLILNIMCAALNLI. At 205 to 223 the chain is on the lumenal side; sequence RGVHLAEHSLQVAHEEIGN. A helical membrane pass occupies residues 224–244; sequence ILAFLVPFVACIFQCYLYLFY. The Cytoplasmic segment spans residues 245 to 248; the sequence is SPAR. A helical membrane pass occupies residues 249 to 269; the sequence is TMKVVLMLLFICLGNMYLHGL. A topological domain (lumenal) is located at residue Arg270. A helical membrane pass occupies residues 271–291; sequence NLWQILFHIGVAFLSSYQILT. Residues 292-303 lie on the Cytoplasmic side of the membrane; that stretch reads RQLQEKQSDCGV.

It belongs to the synaptobrevin family. In terms of tissue distribution, ubiquitously expressed.

The protein resides in the endoplasmic reticulum membrane. In terms of biological role, may be involved in vesicle transport between the ER and the Golgi complex. In Homo sapiens (Human), this protein is Vesicle-trafficking protein SEC22c (SEC22C).